Reading from the N-terminus, the 422-residue chain is MALPWIEKYRPKSFAEIVNQEEAKYTLASWICLKFRAPKEFCTRWAKKRDKEVAEAKAILLAGPPGVGKTTLVHALAREIRYELIELNASDVRTADRLRQVIGRGLRESSLFGFEGKMVLFDEVDGLHVKEDKGGLEEIIEIIETAKIPIIMTANNPYDPKFRPLRDISLVVNLKRLSEEEVVEVLRRICTSEGAKCEEEALRSIAKSSMGDLRAAINDLQMYLSGGRRILTLDDIKRVGERNPQLSMFEILDRVYKARWFDEARAVSFNPSFDWEQYFIWALESIPVVYKDLEIASTAYDRLSKADVFMGRIKRTQEWELLPYALELALGGVSQIKGKPRLPPFIKYGFPQRLLLLAKSKEARRRRDALVEYLAQNLHASKSVIKSEIIYVLSALSKNNQSIIEKLSKALGINAIDIKSVL.

An ATP-binding site is contributed by 63-70 (GPPGVGKT).

It belongs to the activator 1 small subunits family. RfcL subfamily. Heteromultimer composed of small subunits (RfcS) and large subunits (RfcL).

Functionally, part of the RFC clamp loader complex which loads the PCNA sliding clamp onto DNA. This is Replication factor C large subunit from Pyrobaculum aerophilum (strain ATCC 51768 / DSM 7523 / JCM 9630 / CIP 104966 / NBRC 100827 / IM2).